A 151-amino-acid chain; its full sequence is ATP synthase subunit b' (151 aa).

Residues 18-38 (TLPLMALQVVLLTFILNALFF) traverse the membrane as a helical segment.

It belongs to the ATPase B chain family. F-type ATPases have 2 components, F(1) - the catalytic core - and F(0) - the membrane proton channel. F(1) has five subunits: alpha(3), beta(3), gamma(1), delta(1), epsilon(1). F(0) has four main subunits: a(1), b(1), b'(1) and c(10-14). The alpha and beta chains form an alternating ring which encloses part of the gamma chain. F(1) is attached to F(0) by a central stalk formed by the gamma and epsilon chains, while a peripheral stalk is formed by the delta, b and b' chains.

The protein resides in the cellular thylakoid membrane. F(1)F(0) ATP synthase produces ATP from ADP in the presence of a proton or sodium gradient. F-type ATPases consist of two structural domains, F(1) containing the extramembraneous catalytic core and F(0) containing the membrane proton channel, linked together by a central stalk and a peripheral stalk. During catalysis, ATP synthesis in the catalytic domain of F(1) is coupled via a rotary mechanism of the central stalk subunits to proton translocation. Its function is as follows. Component of the F(0) channel, it forms part of the peripheral stalk, linking F(1) to F(0). The b'-subunit is a diverged and duplicated form of b found in plants and photosynthetic bacteria. The polypeptide is ATP synthase subunit b' (Prochlorococcus marinus (strain MIT 9313)).